The chain runs to 411 residues: LIM domain-binding protein 1 (411 aa).

N-acetylserine is present on S2. A Phosphothreonine modification is found at T61. Phosphoserine is present on residues S265 and S302. Disordered regions lie at residues 283-330 (APPA…TFAL) and 367-411 (DAAN…QASQ). Low complexity predominate over residues 302-318 (SGGSTMSSGGGNTNNSN). The region spanning 336–375 (DVMVVGEPTLMGGEFGDEDERLITRLENTQFDAANGIDDE) is the LIM interaction domain (LID) domain.

The protein belongs to the LDB family. Interacts with ESR1. Forms homodimers and heterodimers. Interacts with and activates LHX1/LIM1. Interacts with the LIM domains of ISL1 and LMO2. Can assemble in a complex with LMO2 and TAL1/SCL but does not interact with TAL1/SCL directly. Strongly interacts with the LIM2 domain of LMX1A and more weakly with the LIM1 domain. Homodimerization is not required for, and does not effect, LMX1A-binding. Component of a nuclear TAL-1 complex composed at least of CBFA2T3, LDB1, TAL1 and TCF3. Interacts with LHX6 and LHX9. At neuronal promoters, forms a complex with LHX3 involved in the specification of interneurons, in motor neurons, it is displaced by ISL1 to form a ternary complex in which ISL1 contacts both LHX3 and LDB1. Interacts with SLK; leading to negatively regulate SLK kinase activity. Interacts with YWHAZ. Interacts with PRDM1/BLIMP1. Interacts with LMO4. Interacts with RLIM/RNF12; the interaction inhibits the ubiquitination of LMO proteins. Ubiquitinated by RLIM/RNF12, leading to its degradation by the proteasome. In terms of tissue distribution, expressed in a wide range of adult tissues including brain, heart, skeletal muscle, colon, thymus, spleen, kidney, liver, small intestine, lung and peripheral blood leukocytes.

The protein resides in the nucleus. Functionally, binds to the LIM domain of a wide variety of LIM domain-containing transcription factors. May regulate the transcriptional activity of LIM-containing proteins by determining specific partner interactions. Plays a role in the development of interneurons and motor neurons in cooperation with LHX3 and ISL1. Acts synergistically with LHX1/LIM1 in axis formation and activation of gene expression. Acts with LMO2 in the regulation of red blood cell development, maintaining erythroid precursors in an immature state. This Homo sapiens (Human) protein is LIM domain-binding protein 1 (LDB1).